The chain runs to 29 residues: Cytochrome c oxidase subunit 7A2, mitochondrial (29 aa).

K10 is subject to N6-acetyllysine.

It belongs to the cytochrome c oxidase VIIa family. Component of the cytochrome c oxidase (complex IV, CIV), a multisubunit enzyme composed of 14 subunits. The complex is composed of a catalytic core of 3 subunits MT-CO1, MT-CO2 and MT-CO3, encoded in the mitochondrial DNA, and 11 supernumerary subunits COX4I, COX5A, COX5B, COX6A, COX6B, COX6C, COX7A, COX7B, COX7C, COX8 and NDUFA4, which are encoded in the nuclear genome. The complex exists as a monomer or a dimer and forms supercomplexes (SCs) in the inner mitochondrial membrane with NADH-ubiquinone oxidoreductase (complex I, CI) and ubiquinol-cytochrome c oxidoreductase (cytochrome b-c1 complex, complex III, CIII), resulting in different assemblies (supercomplex SCI(1)III(2)IV(1) and megacomplex MCI(2)III(2)IV(2)). Interacts with PET100.

Its subcellular location is the mitochondrion inner membrane. Its pathway is energy metabolism; oxidative phosphorylation. Component of the cytochrome c oxidase, the last enzyme in the mitochondrial electron transport chain which drives oxidative phosphorylation. The respiratory chain contains 3 multisubunit complexes succinate dehydrogenase (complex II, CII), ubiquinol-cytochrome c oxidoreductase (cytochrome b-c1 complex, complex III, CIII) and cytochrome c oxidase (complex IV, CIV), that cooperate to transfer electrons derived from NADH and succinate to molecular oxygen, creating an electrochemical gradient over the inner membrane that drives transmembrane transport and the ATP synthase. Cytochrome c oxidase is the component of the respiratory chain that catalyzes the reduction of oxygen to water. Electrons originating from reduced cytochrome c in the intermembrane space (IMS) are transferred via the dinuclear copper A center (CU(A)) of subunit 2 and heme A of subunit 1 to the active site in subunit 1, a binuclear center (BNC) formed by heme A3 and copper B (CU(B)). The BNC reduces molecular oxygen to 2 water molecules using 4 electrons from cytochrome c in the IMS and 4 protons from the mitochondrial matrix. The protein is Cytochrome c oxidase subunit 7A2, mitochondrial (COX7A2) of Canis lupus familiaris (Dog).